A 122-amino-acid polypeptide reads, in one-letter code: Large ribosomal subunit protein bL12 (122 aa).

It belongs to the bacterial ribosomal protein bL12 family. As to quaternary structure, homodimer. Part of the ribosomal stalk of the 50S ribosomal subunit. Forms a multimeric L10(L12)X complex, where L10 forms an elongated spine to which 2 to 4 L12 dimers bind in a sequential fashion. Binds GTP-bound translation factors.

Forms part of the ribosomal stalk which helps the ribosome interact with GTP-bound translation factors. Is thus essential for accurate translation. The polypeptide is Large ribosomal subunit protein bL12 (Mycoplasma mycoides subsp. mycoides SC (strain CCUG 32753 / NCTC 10114 / PG1)).